We begin with the raw amino-acid sequence, 239 residues long: Ribosomal RNA small subunit methyltransferase G (239 aa).

S-adenosyl-L-methionine contacts are provided by residues glycine 77, phenylalanine 82, 128-129, and arginine 147; that span reads AE.

Belongs to the methyltransferase superfamily. RNA methyltransferase RsmG family.

The protein localises to the cytoplasm. Specifically methylates the N7 position of guanine in position 535 of 16S rRNA. This chain is Ribosomal RNA small subunit methyltransferase G, found in Bacillus cereus (strain AH187).